A 29-amino-acid chain; its full sequence is MPEPAKSAPKKGSTRTAAKGGKKRRKSRK.

The segment at 1 to 29 (MPEPAKSAPKKGSTRTAAKGGKKRRKSRK) is disordered. Residues Lys-6 and Lys-11 each carry the N6-acetyllysine modification. Position 13 is a phosphoserine (Ser-13). Residues 20-29 (GGKKRRKSRK) are compositionally biased toward basic residues.

The protein belongs to the histone H2B family. In terms of assembly, the nucleosome is a histone octamer containing two molecules each of H2A, H2B, H3 and H4 assembled in one H3-H4 heterotetramer and two H2A-H2B heterodimers. The octamer wraps approximately 147 bp of DNA. Monoubiquitination at the C-terminal Lys gives a specific tag for epigenetic transcriptional activation and is also prerequisite for histone H3 'Lys-4' and 'Lys-79' methylation. Post-translationally, phosphorylated during apoptosis; which facilitates apoptotic chromatin condensation.

It localises to the nucleus. It is found in the chromosome. Core component of nucleosome. Nucleosomes wrap and compact DNA into chromatin, limiting DNA accessibility to the cellular machineries which require DNA as a template. Histones thereby play a central role in transcription regulation, DNA repair, DNA replication and chromosomal stability. DNA accessibility is regulated via a complex set of post-translational modifications of histones, also called histone code, and nucleosome remodeling. The sequence is that of Histone H2B from Cyprinus carpio (Common carp).